Consider the following 190-residue polypeptide: Protein GrpE (190 aa).

Disordered regions lie at residues 1-22 (MAEE…GQTI) and 170-190 (EEGE…KPQS). The span at 181-190 (ARVKVGKPQS) shows a compositional bias: basic residues.

This sequence belongs to the GrpE family. In terms of assembly, homodimer.

It localises to the cytoplasm. Functionally, participates actively in the response to hyperosmotic and heat shock by preventing the aggregation of stress-denatured proteins, in association with DnaK and GrpE. It is the nucleotide exchange factor for DnaK and may function as a thermosensor. Unfolded proteins bind initially to DnaJ; upon interaction with the DnaJ-bound protein, DnaK hydrolyzes its bound ATP, resulting in the formation of a stable complex. GrpE releases ADP from DnaK; ATP binding to DnaK triggers the release of the substrate protein, thus completing the reaction cycle. Several rounds of ATP-dependent interactions between DnaJ, DnaK and GrpE are required for fully efficient folding. The chain is Protein GrpE from Leptospira biflexa serovar Patoc (strain Patoc 1 / Ames).